Reading from the N-terminus, the 316-residue chain is MIAGLKGLKLPKDPRSSVTRTATDWAYAAGWMAVRALPEFAVRNAFDTGARYFARHGGPEQLRKNLARVLGVPPAAVPDPLMCASLESYGRYWREVFRLPTINHRKLARQLDRVIGGLDHLDAALAAGLGAVLALPHSGNWDMAGMWLVQRHGTFTTVAERLKPESLYQRFIDYRESLGFEVLPLSGGERPPFEVLSERLRNNRVVCLMAERDLTRTGVEVDFFGEPTRMPVGPAKLAVETGAALLPTHCWFEGRGWGFQVYPALDCTSGDVAAITQALADRFAQNIAAHPADWHMLQPQWLADLSESRRAQLRSR.

His-137 functions as the Proton acceptor in the catalytic mechanism. Hexadecanoyl-CoA is bound by residues His-137 and Arg-175. Glu-211 is an active-site residue. Glu-240 contacts hexadecanoyl-CoA.

The protein belongs to the LpxL/LpxM/LpxP family.

Its subcellular location is the cell inner membrane. The catalysed reaction is a 2,6-O-bis(alpha-D-mannopyranosyl)-1-phosphatidyl-1D-myo-inositol + an acyl-CoA = a 2-O-(alpha-D-mannosyl)-6-O-(6-O-acyl-alpha-D-mannosyl)-1-phosphatidyl-1D-myo-inositol + CoA. It catalyses the reaction a 1,2-diacyl-sn-glycero-3-phospho-[alpha-D-mannopyranosyl-(1&lt;-&gt;6)-D-myo-inositol] + an acyl-CoA = a 1,2-diacyl-sn-glycero-3-phospho-[alpha-D-6-acyl-mannopyranosyl-(1&lt;-&gt;6)-D-myo-inositol] + CoA. It functions in the pathway phospholipid metabolism; phosphatidylinositol metabolism. Functionally, catalyzes the transfer of a palmitoyl moiety from palmitoyl-CoA to the 6-position of the mannose ring linked to the 2-position of myo-inositol in phosphatidyl-myo-inositol monomannoside (PIM1) or dimannoside (PIM2). Essential for growth and survival in axenic cultures and during macrophage infection and in a mouse model of infection. In Mycobacterium tuberculosis (strain ATCC 25618 / H37Rv), this protein is Phosphatidylinositol mannoside acyltransferase.